We begin with the raw amino-acid sequence, 321 residues long: MKEDCLPSSHVPISDSKSIQKSELLGLLKTYNCYHEGKSFQLRHREEEGTLIIEGLLNIAWGLRRPIRLQMQDDREQVHLPSTSWMPRRPSCPLKEPSPQNGNITAQGPSIQPVHKAESSTDSSGPLEEAEEAPQLMRTKSDASCMSQRRPKCRAPGEAQRIRRHRFSINGHFYNHKTSVFTPAYGSVTNVRVNSTMTTLQVLTLLLNKFRVEDGPSEFALYIVHESGERTKLKDCEYPLISRILHGPCEKIARIFLMEADLGVEVPHEVAQYIKFEMPVLDSFVEKLKEEEEREIIKLTMKFQALRLTMLQRLEQLVEAK.

The tract at residues 79 to 159 (HLPSTSWMPR…RPKCRAPGEA (81 aa)) is disordered. Polar residues predominate over residues 98 to 110 (SPQNGNITAQGPS). Ser141 is modified (phosphoserine). A Ras-associating domain is found at 174–262 (YNHKTSVFTP…ARIFLMEADL (89 aa)). The SARAH domain maps to 270–317 (VAQYIKFEMPVLDSFVEKLKEEEEREIIKLTMKFQALRLTMLQRLEQL).

In terms of assembly, interacts directly with activated KRAS in a GTP-dependent manner. In terms of tissue distribution, widely expressed. Frequently down-regulated in tumor cell lines.

In terms of biological role, potential tumor suppressor. May act as a KRAS effector protein. May promote apoptosis and cell cycle arrest. The chain is Ras association domain-containing protein 4 (RASSF4) from Homo sapiens (Human).